We begin with the raw amino-acid sequence, 302 residues long: MSEDEEKVKLRRLEPAIQKFIKIVIPTDLERLRKHQINIEKYQRCRIWDKLHEEHINAGRTVQQLRSNIREIEKLCLKVRKDDLVLLKRMIDPVKEEASAATAEFLQLHLESVEELKKQFNDEETLLQPPLTRSMTVGGAFHTTEAEASSQSLTQIYALPEIPQDQNAAESWETLEADLIELSQLVTDFSLLVNSQQEKIDSIADHVNSAAVNVEEGTKNLGKAAKYKLAALPVAGALIGGMVGGPIGLLAGFKVAGIAAALGGGVLGFTGGKLIQRKKQKMMEKLTSSCPDLPSQTDKKCS.

Ser2 bears the N-acetylserine mark. At 2–228 (SEDEEKVKLR…KNLGKAAKYK (227 aa)) the chain is on the cytoplasmic side. N6-acetyllysine is present on Lys41. Residues 53–123 (EEHINAGRTV…EELKKQFNDE (71 aa)) are a coiled coil. At Tyr157 the chain carries Phosphotyrosine; by ABL1. A t-SNARE coiled-coil homology domain is found at 162-224 (IPQDQNAAES…EEGTKNLGKA (63 aa)). The chain crosses the membrane as a helical span at residues 229 to 249 (LAALPVAGALIGGMVGGPIGL). Positions 229 to 275 (LAALPVAGALIGGMVGGPIGLLAGFKVAGIAAALGGGVLGFTGGKLI) are necessary and sufficient for localization to autophagosome. The Lumenal segment spans residues 250-254 (LAGFK). Residues 255–275 (VAGIAAALGGGVLGFTGGKLI) traverse the membrane as a helical segment. The Cytoplasmic portion of the chain corresponds to 276-302 (QRKKQKMMEKLTSSCPDLPSQTDKKCS). At Ser289 the chain carries Phosphoserine. The Endoplasmic reticulum retention signal motif lies at 299–302 (KKCS).

The protein belongs to the syntaxin family. Forms a SNARE complex composed of VAMP8, SNAP29 and STX17 involved in fusion of autophagosome with lysosome. Interacts with VAMP7 and VTI1B. Probably interacts with BET1, SCFD1 and SEC22B. Interacts with PTPN2 and ABL1; involved in STX17 phosphorylation. Interacts with COPB1. Interacts with TMED9 and TMED10; the interaction is direct. Interacts with ATG14. Interacts with RUBCNL/PACER; promoting targeting of RUBCNL/PACER to autophagosome. Interacts with VAMP8, SNAP29, VPS39 and VPS41; these interactions are increased in the absence of TMEM39A. Interacts with IRGM; promoting STX17 recruitment to autophagosomes. Interacts with ATG8 proteins GABARAP and MAP1LC3B. Interacts with RNF115; this interaction enhances STX17 stability which in turn promotes autophagosome maturation. Interacts with RAB39A (GTP-bound); the interaction promotes autophagosome-lysosome membrane fusion driven by STX17-SNAP29-VAMP8. Interacts with RAB39B; the interaction may promote a different fonction in autophagy as compared with RAB39A. In terms of assembly, (Microbial infection) The interactions with VAMP8, SNAP29 and VPS41 are decreased in presence of SARS coronavirus-2/SARS-CoV-2 ORF3A protein. Post-translationally, phosphorylated at Tyr-157 probably by ABL1. Dephosphorylation by PTPN2; regulates exit from the endoplasmic reticulum. In terms of processing, (Microbial infection) Cleaved by the L.pneumophila serine protease Lpg1137, impairing endoplasmic reticulum-mitochondria communication, leading to inhibit autophagy.

The protein resides in the endoplasmic reticulum membrane. It localises to the smooth endoplasmic reticulum membrane. The protein localises to the endoplasmic reticulum-Golgi intermediate compartment membrane. It is found in the cytoplasmic vesicle. Its subcellular location is the autophagosome membrane. The protein resides in the COPII-coated vesicle membrane. It localises to the cytoplasm. The protein localises to the cytosol. It is found in the mitochondrion membrane. Its subcellular location is the autolysosome membrane. In terms of biological role, SNAREs, soluble N-ethylmaleimide-sensitive factor-attachment protein receptors, are essential proteins for fusion of cellular membranes. SNAREs localized on opposing membranes assemble to form a trans-SNARE complex, an extended, parallel four alpha-helical bundle that drives membrane fusion. STX17 is a SNARE of the autophagosome involved in autophagy through the direct control of autophagosome membrane fusion with the lysosome membrane. May also play a role in the early secretory pathway where it may maintain the architecture of the endoplasmic reticulum-Golgi intermediate compartment/ERGIC and Golgi and/or regulate transport between the endoplasmic reticulum, the ERGIC and the Golgi. This Homo sapiens (Human) protein is Syntaxin-17.